The following is a 506-amino-acid chain: Cobyric acid synthase (506 aa).

Residues 260-453 form the GATase cobBQ-type domain; the sequence is KVGVAAIYFP…FHGIFNEPAV (194 aa). The active-site Nucleophile is cysteine 341. Histidine 445 is a catalytic residue.

It belongs to the CobB/CobQ family. CobQ subfamily.

It functions in the pathway cofactor biosynthesis; adenosylcobalamin biosynthesis. Catalyzes amidations at positions B, D, E, and G on adenosylcobyrinic A,C-diamide. NH(2) groups are provided by glutamine, and one molecule of ATP is hydrogenolyzed for each amidation. This chain is Cobyric acid synthase, found in Chlorobium chlorochromatii (strain CaD3).